A 68-amino-acid chain; its full sequence is Large ribosomal subunit protein bL35 (68 aa).

Positions 1 to 25 (MGTKIKTHKGTKKRFRLSAKGKAMH) are enriched in basic residues. Residues 1 to 43 (MGTKIKTHKGTKKRFRLSAKGKAMHRQSGTSHLAKGLSKKRRR) form a disordered region.

The protein belongs to the bacterial ribosomal protein bL35 family.

The sequence is that of Large ribosomal subunit protein bL35 from Rhodopirellula baltica (strain DSM 10527 / NCIMB 13988 / SH1).